Reading from the N-terminus, the 223-residue chain is Phage shock protein A homolog (223 aa).

Residues isoleucine 29 to methionine 185 are a coiled coil.

It belongs to the PspA/Vipp/IM30 family.

The sequence is that of Phage shock protein A homolog from Deinococcus radiodurans (strain ATCC 13939 / DSM 20539 / JCM 16871 / CCUG 27074 / LMG 4051 / NBRC 15346 / NCIMB 9279 / VKM B-1422 / R1).